Reading from the N-terminus, the 1588-residue chain is uncharacterized protein (1588 aa).

Residues 486–495 (RKRLTSKTED) show a composition bias toward basic and acidic residues. Disordered regions lie at residues 486 to 515 (RKRL…KRRP) and 1146 to 1176 (GGQD…RELN). Positions 498-507 (NQWTRDCQNS) are enriched in polar residues. A compositionally biased stretch (low complexity) spans 1150–1169 (NVSDQSENQSENQSLESETS).

The protein resides in the virion. This is an uncharacterized protein from Acanthamoeba polyphaga (Amoeba).